The chain runs to 183 residues: Large ribosomal subunit protein uL6 (183 aa).

The protein belongs to the universal ribosomal protein uL6 family. As to quaternary structure, part of the 50S ribosomal subunit.

Its function is as follows. This protein binds to the 23S rRNA, and is important in its secondary structure. It is located near the subunit interface in the base of the L7/L12 stalk, and near the tRNA binding site of the peptidyltransferase center. The chain is Large ribosomal subunit protein uL6 from Chlamydia abortus (strain DSM 27085 / S26/3) (Chlamydophila abortus).